The primary structure comprises 293 residues: MAWVQIRLNSTNEKAETISDYLEEIGSVSVTFMDSQDTPIFEPLPGETRLWGNTDVIALFDAETDMQQIVRLLRQEGHLDENTAYKIEQIEDKDWEREWMDNFHPMQFGKRLWICPSWREVPDPNAVNVMLDPGLAFGTGTHPTTALCLEWLDGLDLAGKTVIDFGCGSGILAIAALKLGAKEAIGIDIDPQAILASRNNAEQNGVADRLKLYLSEDKPANMKAEVVVANILAGPLKELYPVISELVKEKGNLGLSGILATQAESVCEAYQAKFDLDAVVEREEWCRITGKLK.

Positions 145, 166, 188, and 230 each coordinate S-adenosyl-L-methionine.

The protein belongs to the methyltransferase superfamily. PrmA family.

The protein localises to the cytoplasm. It carries out the reaction L-lysyl-[protein] + 3 S-adenosyl-L-methionine = N(6),N(6),N(6)-trimethyl-L-lysyl-[protein] + 3 S-adenosyl-L-homocysteine + 3 H(+). Functionally, methylates ribosomal protein L11. This is Ribosomal protein L11 methyltransferase from Mannheimia succiniciproducens (strain KCTC 0769BP / MBEL55E).